The following is a 586-amino-acid chain: Penicillin-binding protein activator LpoA (586 aa).

The first 26 residues, 1 to 26, serve as a signal peptide directing secretion; the sequence is MLSILMQGLRLKKCFLPILVMFFLAG. The N-palmitoyl cysteine moiety is linked to residue cysteine 27. Cysteine 27 carries the S-diacylglycerol cysteine lipid modification.

This sequence belongs to the LpoA family. Interacts with PBP1a.

The protein localises to the cell outer membrane. Functionally, regulator of peptidoglycan synthesis that is essential for the function of penicillin-binding protein 1A (PBP1a). This chain is Penicillin-binding protein activator LpoA, found in Histophilus somni (strain 2336) (Haemophilus somnus).